Reading from the N-terminus, the 361-residue chain is tRNA/tmRNA (uracil-C(5))-methyltransferase (361 aa).

The S-adenosyl-L-methionine site is built by Gln183, Tyr211, Asn216, Glu232, and Asp294. Cys319 serves as the catalytic Nucleophile. The Proton acceptor role is filled by Glu353.

Belongs to the class I-like SAM-binding methyltransferase superfamily. RNA M5U methyltransferase family. TrmA subfamily.

The enzyme catalyses uridine(54) in tRNA + S-adenosyl-L-methionine = 5-methyluridine(54) in tRNA + S-adenosyl-L-homocysteine + H(+). The catalysed reaction is uridine(341) in tmRNA + S-adenosyl-L-methionine = 5-methyluridine(341) in tmRNA + S-adenosyl-L-homocysteine + H(+). Functionally, dual-specificity methyltransferase that catalyzes the formation of 5-methyluridine at position 54 (m5U54) in all tRNAs, and that of position 341 (m5U341) in tmRNA (transfer-mRNA). The chain is tRNA/tmRNA (uracil-C(5))-methyltransferase from Acinetobacter baumannii (strain ACICU).